The chain runs to 261 residues: Cyclin-J18-like (261 aa).

Belongs to the cyclin family.

The sequence is that of Cyclin-J18-like from Oryza sativa subsp. japonica (Rice).